The chain runs to 579 residues: Putative fatty-acid--CoA ligase fadD21 (579 aa).

The protein belongs to the ATP-dependent AMP-binding enzyme family.

The sequence is that of Putative fatty-acid--CoA ligase fadD21 (fadD21) from Mycobacterium leprae (strain TN).